The primary structure comprises 205 residues: ATP phosphoribosyltransferase (205 aa).

Belongs to the ATP phosphoribosyltransferase family. Short subfamily. As to quaternary structure, heteromultimer composed of HisG and HisZ subunits.

It is found in the cytoplasm. It carries out the reaction 1-(5-phospho-beta-D-ribosyl)-ATP + diphosphate = 5-phospho-alpha-D-ribose 1-diphosphate + ATP. It participates in amino-acid biosynthesis; L-histidine biosynthesis; L-histidine from 5-phospho-alpha-D-ribose 1-diphosphate: step 1/9. Catalyzes the condensation of ATP and 5-phosphoribose 1-diphosphate to form N'-(5'-phosphoribosyl)-ATP (PR-ATP). Has a crucial role in the pathway because the rate of histidine biosynthesis seems to be controlled primarily by regulation of HisG enzymatic activity. The sequence is that of ATP phosphoribosyltransferase from Vesicomyosocius okutanii subsp. Calyptogena okutanii (strain HA).